The primary structure comprises 234 residues: Mitochondrial assembly of ribosomal large subunit protein 1 (234 aa).

A disordered region spans residues 63–88 (SEPGLEERAEGTVNEGRPESDAADHT).

This sequence belongs to the Iojap/RsfS family. In terms of assembly, associates with the mitochondrial ribosome large subunit (39S) via interaction with MRPL12 and/or MRPL14. The interaction generates steric hindrance that is expected to prevent premature association of the 28S and 39S ribosomal subunits. Interacts with intermediates of the mitochondrial ribosome large subunit (mt-LSU) (recruits the mitochondrial ribosome and complex I assembly factor AltMIEF1 and NDUFAB1); regulates mitochondrial ribosomes assembly. Interacts with MRPL12 and MRPL14.

It is found in the mitochondrion matrix. Required for normal mitochondrial ribosome function and mitochondrial translation. May play a role in ribosome biogenesis by preventing premature association of the 28S and 39S ribosomal subunits. Interacts with mitochondrial ribosomal protein uL14m (MRPL14), probably blocking formation of intersubunit bridge B8, preventing association of the 28S and 39S ribosomal subunits. Addition to isolated mitochondrial ribosomal subunits partially inhibits translation, probably by interfering with the association of the 28S and 39S ribosomal subunits and the formation of functional ribosomes. May also participate in the assembly and/or regulation of the stability of the large subunit of the mitochondrial ribosome. May function as a ribosomal silencing factor. This is Mitochondrial assembly of ribosomal large subunit protein 1 (MALSU1) from Homo sapiens (Human).